Here is a 192-residue protein sequence, read N- to C-terminus: Pyridoxal 5'-phosphate synthase subunit PdxT (192 aa).

50–52 (GES) contributes to the L-glutamine binding site. Cys-82 functions as the Nucleophile in the catalytic mechanism. Residues Arg-109 and 136–137 (IR) each bind L-glutamine. Active-site charge relay system residues include His-172 and Glu-174.

This sequence belongs to the glutaminase PdxT/SNO family. In the presence of PdxS, forms a dodecamer of heterodimers. Only shows activity in the heterodimer.

The enzyme catalyses aldehydo-D-ribose 5-phosphate + D-glyceraldehyde 3-phosphate + L-glutamine = pyridoxal 5'-phosphate + L-glutamate + phosphate + 3 H2O + H(+). It catalyses the reaction L-glutamine + H2O = L-glutamate + NH4(+). It participates in cofactor biosynthesis; pyridoxal 5'-phosphate biosynthesis. Catalyzes the hydrolysis of glutamine to glutamate and ammonia as part of the biosynthesis of pyridoxal 5'-phosphate. The resulting ammonia molecule is channeled to the active site of PdxS. The chain is Pyridoxal 5'-phosphate synthase subunit PdxT from Haemophilus influenzae (strain PittGG).